The sequence spans 320 residues: MSVIDLLKQRVQSAGKKPVIIFPEGWSPTVMEAVNQLQQAGILTPPVIFRTRSEVPAGFNTAIKHYVIEEMDLTKYANFVYEKRKHKGMEMREAQKFVRDASSLAATLVALNEVDGEVCGKEYATKDTLRPALQLLGTGNFVSSVFIMEKNEERLYFTDCAFAVYPSPQELAVVAENTFKFAQSMGEPELKMVFLSYSTLGSGKGEAVDKVVSATQIFLEKHPELKANVCGELQFDSAFVEKVRKQKAPNLTWNGSANIYVFPNLDAGNIGYKIAQRLGGYEAIGPIVLGLARPFNDLSRGASVSDVFNVGIITAAQTLK.

Belongs to the phosphate acetyltransferase and butyryltransferase family.

The protein localises to the cytoplasm. It catalyses the reaction acetyl-CoA + phosphate = acetyl phosphate + CoA. It participates in metabolic intermediate biosynthesis; acetyl-CoA biosynthesis; acetyl-CoA from acetate: step 2/2. The polypeptide is Phosphate acetyltransferase (pta) (Mycoplasma pneumoniae (strain ATCC 29342 / M129 / Subtype 1) (Mycoplasmoides pneumoniae)).